A 793-amino-acid polypeptide reads, in one-letter code: Serine/threonine-protein kinase MARK1 (793 aa).

A disordered region spans residues 1 to 40; it reads MSARTPLPTVNERDTENHTSVDGYTETHIPPTKSSSRQNI. Phosphothreonine is present on Thr-5. In terms of domain architecture, Protein kinase spans 60-311; it reads YRLQKTIGKG…LEQIMKDRWM (252 aa). ATP contacts are provided by residues 66–74 and Lys-89; that span reads IGKGNFAKV. Asp-182 acts as the Proton acceptor in catalysis. Phosphothreonine is present on Thr-208. At Thr-215 the chain carries Phosphothreonine; by LKB1 and TAOK1. Ser-219 carries the phosphoserine; by GSK3-beta modification. A UBA domain is found at 329–370; that stretch reads DLNDAKRIDIMVTMGFARDEINDALVSQKYDEVMATYILLGR. Disordered stretches follow at residues 377 to 499 and 517 to 697; these read GGES…GGSM and LQNG…KPRS. The span at 380–403 shows a compositional bias: polar residues; that stretch reads SLSSGNLCQRSRPSSDLNNSTLQS. A phosphoserine mark is found at Ser-382, Ser-390, Ser-393, Ser-403, Ser-423, and Ser-444. Basic and acidic residues predominate over residues 447-459; sequence SEQKEEWDKDTAR. The span at 462 to 473 shows a compositional bias: polar residues; it reads GSTTVGSKSEVT. Ser-475 carries the post-translational modification Phosphoserine. Residues 487–499 are compositionally biased toward polar residues; the sequence is AGPSNNVYSGGSM. Low complexity-rich tracts occupy residues 523–547 and 585–599; these read SSLTEMSASSMSSTGSTVASAGPSA and PAASPSAHSISASTP. Ser-588 carries the phosphoserine modification. A Phosphothreonine; by PKC/PRKCZ modification is found at Thr-613. The span at 647 to 657 shows a compositional bias: polar residues; the sequence is GTSTGIISKIT. Composition is skewed to basic and acidic residues over residues 661–676 and 683–695; these read VRRDPSEGEASGRTDT and EPKDKEEGKEAKP. The residue at position 666 (Ser-666) is a Phosphoserine. A KA1 domain is found at 744–793; it reads DARQDSLVQWEMEVCKLPRLSLNGVRFKRISGTSIAFKNIASKIANELKL.

Belongs to the protein kinase superfamily. CAMK Ser/Thr protein kinase family. SNF1 subfamily. As to quaternary structure, interacts with MAPT/TAU. It depends on Mg(2+) as a cofactor. In terms of processing, phosphorylation at Thr-613 by PRKCZ/aPKC in polarized epithelial cells inhibits the kinase activity. Phosphorylated at Thr-215 by STK11/LKB1 in complex with STE20-related adapter-alpha (STRADA) pseudo kinase and CAB39. Phosphorylation at Thr-215 by TAOK1 activates the kinase activity, leading to phosphorylation and detachment of MAPT/TAU from microtubules. Phosphorylation at Ser-219 by GSK3-beta (GSK3B) inhibits the kinase activity. As to expression, highly expressed in brain and spleen and at lower levels in kidney and skeletal muscle.

The protein localises to the cell membrane. It localises to the cytoplasm. Its subcellular location is the cytoskeleton. It is found in the cell projection. The protein resides in the dendrite. It carries out the reaction L-seryl-[protein] + ATP = O-phospho-L-seryl-[protein] + ADP + H(+). It catalyses the reaction L-threonyl-[protein] + ATP = O-phospho-L-threonyl-[protein] + ADP + H(+). The enzyme catalyses L-seryl-[tau protein] + ATP = O-phospho-L-seryl-[tau protein] + ADP + H(+). The catalysed reaction is L-threonyl-[tau protein] + ATP = O-phospho-L-threonyl-[tau protein] + ADP + H(+). With respect to regulation, activated by phosphorylation on Thr-215. Inhibited by phosphorylation at Ser-219. Serine/threonine-protein kinase. Involved in cell polarity and microtubule dynamics regulation. Phosphorylates DCX, MAP2 and MAP4. Phosphorylates the microtubule-associated protein MAPT/TAU. Involved in cell polarity by phosphorylating the microtubule-associated proteins MAP2, MAP4 and MAPT/TAU at KXGS motifs, causing detachment from microtubules, and their disassembly. Involved in the regulation of neuronal migration through its dual activities in regulating cellular polarity and microtubule dynamics, possibly by phosphorylating and regulating DCX. Also acts as a positive regulator of the Wnt signaling pathway, probably by mediating phosphorylation of dishevelled proteins (DVL1, DVL2 and/or DVL3). The protein is Serine/threonine-protein kinase MARK1 of Rattus norvegicus (Rat).